We begin with the raw amino-acid sequence, 428 residues long: Probable G-protein coupled receptor (428 aa).

At 1-46 the chain is on the extracellular side; the sequence is MMADKTSPMITSDHSISNFSTGLFGPHPTVPPDVGVVTSSQSQMKD. N-linked (GlcNAc...) asparagine glycosylation occurs at asparagine 18. Residues 47-67 form a helical membrane-spanning segment; it reads LFGLFCMVTLNLIALLANTGV. Over 68–93 the chain is Cytoplasmic; sequence MVAIARAPHLKKFAFVCHLCAVDVLC. A helical transmembrane segment spans residues 94–114; sequence AILLMPLGIISSSPFFGTVVF. The Extracellular segment spans residues 115-120; that stretch reads TILECQ. The chain crosses the membrane as a helical span at residues 121-141; it reads VYIFLNVFLIWLSILTITAIS. Residues 142–162 are Cytoplasmic-facing; that stretch reads VERYFYIVHPMRYEVKMTINL. Residues 163-183 form a helical membrane-spanning segment; the sequence is VIGVMLLIWFKSLLLALVTLF. At 184 to 210 the chain is on the extracellular side; that stretch reads GWPPYGHQSSIAASHCSLHASHSRLRG. The chain crosses the membrane as a helical span at residues 211–231; that stretch reads VFAVLFCVICFLAPVVVIFSV. At 232-293 the chain is on the cytoplasmic side; the sequence is YSAVYKVARS…PERAFSGGKA (62 aa). Residues 294 to 314 form a helical membrane-spanning segment; it reads ALTLAFIVGQFLVCWLPFFIF. Over 315-428 the chain is Extracellular; it reads HLQMSLTGSM…IPGQIPEEQA (114 aa). Residues 398–414 are compositionally biased toward polar residues; it reads SETHPSFANSNPRNMEN. Positions 398-428 are disordered; the sequence is SETHPSFANSNPRNMENQAHKIPGQIPEEQA.

It belongs to the G-protein coupled receptor 1 family.

Its subcellular location is the cell membrane. This Oryzias latipes (Japanese rice fish) protein is Probable G-protein coupled receptor.